The primary structure comprises 132 residues: Phycocyanin PC645 alpha-1 subunit (132 aa).

Positions 54 and 68 each coordinate (2R,3E)-phycocyanobilin. Residues cysteine 70, glutamine 76, tyrosine 77, and lysine 92 each contribute to the mesobiliverdin site. 15,16-dihydrobiliverdin contacts are provided by proline 123 and isoleucine 125.

This sequence belongs to the phycoerythrin family. As to quaternary structure, heterotetramer of 2 different alpha chains and 2 identical beta chains which form 2 alpha-beta heterodimers within the heterotetramer. In terms of processing, contains two phycocyanobilin chromophores, one mesobiliverdin chromophore and one 15,16-dihydrobiliverdin chromophore with binding mediated by both the alpha and beta subunits.

It is found in the plastid. It localises to the chloroplast thylakoid membrane. Functionally, light-harvesting photosynthetic tetrapyrrole chromophore-protein from the phycobiliprotein complex. The protein is Phycocyanin PC645 alpha-1 subunit of Chroomonas sp. (strain CCMP270).